A 179-amino-acid polypeptide reads, in one-letter code: Large ribosomal subunit protein uL6 (179 aa).

It belongs to the universal ribosomal protein uL6 family. In terms of assembly, part of the 50S ribosomal subunit.

This protein binds to the 23S rRNA, and is important in its secondary structure. It is located near the subunit interface in the base of the L7/L12 stalk, and near the tRNA binding site of the peptidyltransferase center. The sequence is that of Large ribosomal subunit protein uL6 from Treponema pallidum (strain Nichols).